Reading from the N-terminus, the 209-residue chain is High mobility group protein B2 (209 aa).

Lys-3 carries the N6-acetyllysine modification. Positions Pro-9 to Val-79 form a DNA-binding region, HMG box 1. Cys-23 carries the cysteine sulfonic acid (-SO3H); alternate modification. A disulfide bond links Cys-23 and Cys-45. An N6-acetyllysine modification is found at Lys-30. Position 35 is a phosphoserine (Ser-35). An N6-acetyllysine modification is found at Lys-43. Residue Cys-45 is modified to Cysteine sulfonic acid (-SO3H); alternate. Positions Met-52–Lys-76 are enriched in basic and acidic residues. Disordered regions lie at residues Met-52–Lys-150 and Tyr-162–Glu-209. Residue Lys-90 is modified to N6-acetyllysine. Residues Pro-95–Arg-163 constitute a DNA-binding region (HMG box 2). Phosphoserine is present on Ser-100. Position 106 is a cysteine sulfonic acid (-SO3H) (Cys-106). 3 stretches are compositionally biased toward basic and acidic residues: residues Ser-107–His-117, Ser-137–Lys-150, and Tyr-162–Lys-172. Lys-114 and Lys-141 each carry N6-acetyllysine. The interval Lys-165–Gly-180 is required for chemotactic activity. The segment covering Pro-187–Glu-209 has biased composition (acidic residues).

The protein belongs to the HMGB family. In terms of assembly, interacts with POU2F2, POU2F1 and POU3F1. Component of the RAG complex composed of core components RAG1 and RAG2, and associated component HMGB1 or HMGB2. Component of the SET complex, composed of at least ANP32A, APEX1, HMGB2, NME1, SET and TREX1. Directly interacts with SET. Interacts with LEF1. Post-translationally, reduction/oxidation of cysteine residues Cys-23, Cys-45 and Cys-106 and a possible intramolecular disulfide bond involving Cys-23 and Cys-45 give rise to different redox forms with specific functional activities in various cellular compartments: 1- fully reduced HMGB2 (HMGB2C23hC45hC106h), 2- disulfide HMGB2 (HMGB2C23-C45C106h) and 3- sulfonyl HMGB2 (HMGB2C23soC45soC106so).

It localises to the nucleus. It is found in the chromosome. Its subcellular location is the cytoplasm. The protein localises to the secreted. Multifunctional protein with various roles in different cellular compartments. May act in a redox sensitive manner. In the nucleus is an abundant chromatin-associated non-histone protein involved in transcription, chromatin remodeling and V(D)J recombination and probably other processes. Binds DNA with a preference to non-canonical DNA structures such as single-stranded DNA. Can bent DNA and enhance DNA flexibility by looping thus providing a mechanism to promote activities on various gene promoters by enhancing transcription factor binding and/or bringing distant regulatory sequences into close proximity. Involved in V(D)J recombination by acting as a cofactor of the RAG complex: acts by stimulating cleavage and RAG protein binding at the 23 bp spacer of conserved recombination signal sequences (RSS). Proposed to be involved in the innate immune response to nucleic acids by acting as a cytoplasmic promiscuous immunogenic DNA/RNA sensor which cooperates with subsequent discriminative sensing by specific pattern recognition receptors. In the extracellular compartment acts as a chemokine. Promotes proliferation and migration of endothelial cells implicating AGER/RAGE. Has antimicrobial activity in gastrointestinal epithelial tissues. Involved in inflammatory response to antigenic stimulus coupled with pro-inflammatory activity. May play a role in germ cell differentiation. Involved in modulation of neurogenesis probably by regulation of neural stem proliferation. Involved in articular cartilage surface maintenance implicating LEF1 and the Wnt/beta-catenin pathway. The protein is High mobility group protein B2 (HMGB2) of Bos taurus (Bovine).